The following is a 130-amino-acid chain: Small ribosomal subunit protein uS8 (130 aa).

It belongs to the universal ribosomal protein uS8 family. Part of the 30S ribosomal subunit.

One of the primary rRNA binding proteins, it binds directly to 16S rRNA central domain where it helps coordinate assembly of the platform of the 30S subunit. The polypeptide is Small ribosomal subunit protein uS8 (Methanosphaerula palustris (strain ATCC BAA-1556 / DSM 19958 / E1-9c)).